A 417-amino-acid chain; its full sequence is DnaJ protein homolog ANJ1 (417 aa).

In terms of domain architecture, J spans 11–76 (STRYYEILGV…REIYDQYGED (66 aa)). The CR-type zinc-finger motif lies at 135 to 219 (GTTKKLSLSR…CKGEKVVQEK (85 aa)). CXXCXGXG motif repeat units lie at residues 148–155 (CSKCTGKG), 164–171 (CSGCQGTG), and 191–198 (CNECKGTG). One copy of the CXXCXGXG motif; approximate repeat lies at 207–214 (CPQCKGEK). Residues 384 to 417 (IEEEMKRKQTQAQQEAYDEDDEPAGGQRVQCAQQ) form a disordered region. Cysteine methyl ester is present on Cys414. Cys414 carries S-farnesyl cysteine lipidation. Residues 415-417 (AQQ) constitute a propeptide, removed in mature form.

Its subcellular location is the membrane. Functionally, plays a continuous role in plant development probably in the structural organization of compartments. This chain is DnaJ protein homolog ANJ1, found in Atriplex nummularia (Old man saltbush).